The primary structure comprises 219 residues: Non-specific lipid transfer protein GPI-anchored 25 (219 aa).

The signal sequence occupies residues 1–22; that stretch reads MATKITGVFILILTITFSSSSA. Intrachain disulfides connect C39-C85, C49-C68, C69-C110, and C83-C123. N59 carries N-linked (GlcNAc...) asparagine glycosylation. An N-linked (GlcNAc...) asparagine glycan is attached at N148. A disordered region spans residues 152 to 181; it reads SPQSVDLAPEVSPSSDLFSPETATLAPPPP. S192 is lipidated: GPI-anchor amidated serine. Residues 193-219 constitute a propeptide, removed in mature form; it reads SDSLKIRNFWFPSTIIMTFATSILARI.

It belongs to the plant LTP family.

Its subcellular location is the cell membrane. Probable lipid transfer protein. In Arabidopsis thaliana (Mouse-ear cress), this protein is Non-specific lipid transfer protein GPI-anchored 25.